A 619-amino-acid polypeptide reads, in one-letter code: Dihydroxy-acid dehydratase (619 aa).

Position 81 (Asp81) interacts with Mg(2+). [2Fe-2S] cluster is bound at residue Cys122. Asp123 and Lys124 together coordinate Mg(2+). N6-carboxylysine is present on Lys124. Cys195 is a binding site for [2Fe-2S] cluster. Glu494 lines the Mg(2+) pocket. Ser520 serves as the catalytic Proton acceptor.

The protein belongs to the IlvD/Edd family. In terms of assembly, homodimer. [2Fe-2S] cluster is required as a cofactor. It depends on Mg(2+) as a cofactor.

It carries out the reaction (2R)-2,3-dihydroxy-3-methylbutanoate = 3-methyl-2-oxobutanoate + H2O. The catalysed reaction is (2R,3R)-2,3-dihydroxy-3-methylpentanoate = (S)-3-methyl-2-oxopentanoate + H2O. It participates in amino-acid biosynthesis; L-isoleucine biosynthesis; L-isoleucine from 2-oxobutanoate: step 3/4. Its pathway is amino-acid biosynthesis; L-valine biosynthesis; L-valine from pyruvate: step 3/4. In terms of biological role, functions in the biosynthesis of branched-chain amino acids. Catalyzes the dehydration of (2R,3R)-2,3-dihydroxy-3-methylpentanoate (2,3-dihydroxy-3-methylvalerate) into 2-oxo-3-methylpentanoate (2-oxo-3-methylvalerate) and of (2R)-2,3-dihydroxy-3-methylbutanoate (2,3-dihydroxyisovalerate) into 2-oxo-3-methylbutanoate (2-oxoisovalerate), the penultimate precursor to L-isoleucine and L-valine, respectively. The protein is Dihydroxy-acid dehydratase of Shewanella denitrificans (strain OS217 / ATCC BAA-1090 / DSM 15013).